The following is an 81-amino-acid chain: Large ribosomal subunit protein bL31B (81 aa).

It belongs to the bacterial ribosomal protein bL31 family. Type B subfamily. As to quaternary structure, part of the 50S ribosomal subunit.

This chain is Large ribosomal subunit protein bL31B, found in Lactococcus lactis subsp. lactis (strain IL1403) (Streptococcus lactis).